Consider the following 179-residue polypeptide: Peptide deformylase 2 (179 aa).

Residues C104 and H146 each contribute to the Fe cation site. E147 is an active-site residue. H150 is a Fe cation binding site.

The protein belongs to the polypeptide deformylase family. It depends on Fe(2+) as a cofactor.

The enzyme catalyses N-terminal N-formyl-L-methionyl-[peptide] + H2O = N-terminal L-methionyl-[peptide] + formate. Its function is as follows. Removes the formyl group from the N-terminal Met of newly synthesized proteins. Requires at least a dipeptide for an efficient rate of reaction. N-terminal L-methionine is a prerequisite for activity but the enzyme has broad specificity at other positions. The protein is Peptide deformylase 2 of Streptomyces coelicolor (strain ATCC BAA-471 / A3(2) / M145).